The chain runs to 81 residues: Elicitor peptide 4 (81 aa).

The propeptide occupies 1–54 (MERGVSYYLWIPFKFIHQTFGSLLLKLLGLRSPSDHSFPEDGEEEVKVVEVSSR). Residues 57-81 (PGKKNVLKKSRESSGKPGGTNKKPF) form a disordered region.

Belongs to the brassicaceae elicitor peptide family.

Functionally, elicitor of plant defense. The chain is Elicitor peptide 4 (PEP4) from Arabidopsis thaliana (Mouse-ear cress).